We begin with the raw amino-acid sequence, 282 residues long: Pseudokinase OPG198 (282 aa).

ATP-binding residues include M1 and K30. In terms of domain architecture, Protein kinase spans 1–282 (MESFKYCFDN…DRLRRLFIQD (282 aa)).

This sequence belongs to the protein kinase superfamily. Ser/Thr protein kinase family. Poxviruses subfamily. In terms of assembly, interacts with B1/VPK1. Interacts with host VRK1. Interacts with host VRK2.

It is found in the host nucleus. Both catalytically active kinases B1/VPK1 and host VRK2 repress B12 inhibitory activity in a B1/VPK1 deletion mutant strain. Pseudokinase that plays a role in viral DNA replication repression by activating the antiviral protein BANF1 and inhibiting the activity of host VRK1, a cellular modulator of BANF1. The chain is Pseudokinase OPG198 (OPG198) from Cynomys gunnisoni (Gunnison's prairie dog).